Consider the following 374-residue polypeptide: Chaperone protein DnaJ (374 aa).

The J domain maps to S4–G69. Residues G136–K213 form a CR-type zinc finger. Positions 149, 152, 165, 168, 187, 190, 201, and 204 each coordinate Zn(2+). 4 CXXCXGXG motif repeats span residues C149–G156, C165–G172, C187–G194, and C201–G208.

The protein belongs to the DnaJ family. In terms of assembly, homodimer. The cofactor is Zn(2+).

The protein resides in the cytoplasm. In terms of biological role, participates actively in the response to hyperosmotic and heat shock by preventing the aggregation of stress-denatured proteins and by disaggregating proteins, also in an autonomous, DnaK-independent fashion. Unfolded proteins bind initially to DnaJ; upon interaction with the DnaJ-bound protein, DnaK hydrolyzes its bound ATP, resulting in the formation of a stable complex. GrpE releases ADP from DnaK; ATP binding to DnaK triggers the release of the substrate protein, thus completing the reaction cycle. Several rounds of ATP-dependent interactions between DnaJ, DnaK and GrpE are required for fully efficient folding. Also involved, together with DnaK and GrpE, in the DNA replication of plasmids through activation of initiation proteins. In Campylobacter jejuni subsp. doylei (strain ATCC BAA-1458 / RM4099 / 269.97), this protein is Chaperone protein DnaJ.